The chain runs to 171 residues: tRNA-splicing endonuclease (171 aa).

Active-site residues include Tyr-110, His-117, and Lys-148.

The protein belongs to the tRNA-intron endonuclease family. Archaeal short subfamily. In terms of assembly, homotetramer; although the tetramer contains four active sites, only two participate in the cleavage. Therefore, it should be considered as a dimer of dimers.

It catalyses the reaction pretRNA = a 3'-half-tRNA molecule with a 5'-OH end + a 5'-half-tRNA molecule with a 2',3'-cyclic phosphate end + an intron with a 2',3'-cyclic phosphate and a 5'-hydroxyl terminus.. Functionally, endonuclease that removes tRNA introns. Cleaves pre-tRNA at the 5'- and 3'-splice sites to release the intron. The products are an intron and two tRNA half-molecules bearing 2',3' cyclic phosphate and 5'-OH termini. Recognizes a pseudosymmetric substrate in which 2 bulged loops of 3 bases are separated by a stem of 4 bp. The chain is tRNA-splicing endonuclease from Thermococcus onnurineus (strain NA1).